The primary structure comprises 196 residues: HTH-type transcriptional regulator EcpR (196 aa).

Positions 138–196 constitute an HTH luxR-type domain; it reads KDIKKDKITDREMEIIRMTAQGMLPKSIARIENCSVKTVYTHRRNAEAKLYSKIYKLVP. Positions 162–181 form a DNA-binding region, H-T-H motif; it reads PKSIARIENCSVKTVYTHRR.

Belongs to the EcpR/MatA family.

It is found in the cytoplasm. Part of the ecpRABCDE operon, which encodes the E.coli common pilus (ECP). ECP is found in both commensal and pathogenic strains and plays a dual role in early-stage biofilm development and host cell recognition. Positively regulates the expression of the ecp operon. The protein is HTH-type transcriptional regulator EcpR (ecpR) of Escherichia coli O17:K52:H18 (strain UMN026 / ExPEC).